The sequence spans 54 residues: Rubredoxin (54 aa).

The Rubredoxin-like domain maps to 1 to 54 (MKKYVCVVCGYIYDPAEGDPDNGVNPGTSFEDIPDDWVCPLCGVGKDQFEPSEE). Positions 6, 9, 39, and 42 each coordinate Fe cation.

The protein belongs to the rubredoxin family. It depends on Fe(3+) as a cofactor.

Functionally, rubredoxin is a small nonheme, iron protein lacking acid-labile sulfide. Its single Fe, chelated to 4 Cys, functions as an electron acceptor and may also stabilize the conformation of the molecule. Functions as an intermediate component in the electron transfer chain: NADH-&gt;NROR-&gt;Rd-&gt;FprA1/2 in which Rd serves as the proximal electron donor to the FDPs that exhibit H(2)O-forming NADH oxidase activity. Also functions as the proximal electron donor to the Dfx and revRbr proteins that display superoxide reductase (SOR) and NADH peroxidase activity, respectively. Therefore, is a key electron carrier in an efficient multienzyme complex that can scavenge O(2) and reactive oxygen species (ROS), and thus plays an important role in the oxidative stress defense system in C.acetobutylicum, an obligate anaerobic bacterium. This is Rubredoxin (rd) from Clostridium acetobutylicum (strain ATCC 824 / DSM 792 / JCM 1419 / IAM 19013 / LMG 5710 / NBRC 13948 / NRRL B-527 / VKM B-1787 / 2291 / W).